The following is a 201-amino-acid chain: 3-isopropylmalate dehydratase small subunit (201 aa).

Belongs to the LeuD family. LeuD type 1 subfamily. Heterodimer of LeuC and LeuD.

It catalyses the reaction (2R,3S)-3-isopropylmalate = (2S)-2-isopropylmalate. The protein operates within amino-acid biosynthesis; L-leucine biosynthesis; L-leucine from 3-methyl-2-oxobutanoate: step 2/4. In terms of biological role, catalyzes the isomerization between 2-isopropylmalate and 3-isopropylmalate, via the formation of 2-isopropylmaleate. The protein is 3-isopropylmalate dehydratase small subunit of Enterobacter sp. (strain 638).